A 93-amino-acid chain; its full sequence is Consomatin G2 (93 aa).

The N-terminal stretch at 1-18 (MQTAYWVMLMMMVCITAP) is a signal peptide. A propeptide spanning residues 19–69 (LPEGGKPNSGIRGLVPNDLTPQHTLRSLISRRQTDVLLDATLLTTPAPEQR) is cleaved from the precursor. Cys72 and Cys77 are joined by a disulfide. The residue at position 74 (Trp74) is a D-tryptophan. Positions 79-93 (WRPYPWRRRDLNGKR) are excised as a propeptide.

It belongs to the conotoxin C superfamily. Consomatin family. In terms of tissue distribution, expressed by the venom duct.

It is found in the secreted. In terms of biological role, moderately activates human somatostatin receptors (SSTR) with a preferential activation of SSTR1 and SSTR4. In vivo, does not cause behavioral changes in mice within a few minutes of intracranial injection, but causes a progressive loss of movement thereafter. Four to five hours after injection, mice recover, even with the highest dose tested. Shows antinociception and antihyperalgesia activities in two mouse models of acute pain, most probably by acting outside the central nervous system. The chain is Consomatin G2 from Conus geographus (Geography cone).